The primary structure comprises 188 residues: dCTP deaminase (188 aa).

DCTP-binding positions include 111-116 (KSTYAR), 135-137 (TLE), Gln156, Tyr170, and Gln180. Glu137 (proton donor/acceptor) is an active-site residue.

The protein belongs to the dCTP deaminase family. Homotrimer.

The catalysed reaction is dCTP + H2O + H(+) = dUTP + NH4(+). It participates in pyrimidine metabolism; dUMP biosynthesis; dUMP from dCTP (dUTP route): step 1/2. Catalyzes the deamination of dCTP to dUTP. The polypeptide is dCTP deaminase (Ectopseudomonas mendocina (strain ymp) (Pseudomonas mendocina)).